The sequence spans 552 residues: Membrane protein insertase YidC (552 aa).

The chain crosses the membrane as a helical span at residues Ile3 to Trp23. A disordered region spans residues Ser36 to Asp59. The span at Thr42–Asp59 shows a compositional bias: low complexity. 3 helical membrane-spanning segments follow: residues Trp364–Ala384, Phe430–Leu450, and Met504–Leu524.

The protein belongs to the OXA1/ALB3/YidC family. Type 1 subfamily. Interacts with the Sec translocase complex via SecD. Specifically interacts with transmembrane segments of nascent integral membrane proteins during membrane integration.

The protein localises to the cell inner membrane. Functionally, required for the insertion and/or proper folding and/or complex formation of integral membrane proteins into the membrane. Involved in integration of membrane proteins that insert both dependently and independently of the Sec translocase complex, as well as at least some lipoproteins. Aids folding of multispanning membrane proteins. The polypeptide is Membrane protein insertase YidC (Paraburkholderia xenovorans (strain LB400)).